The chain runs to 110 residues: Cytochrome c6 (110 aa).

The first 25 residues, 1–25 (MKKLVSSVILALILFGFSWVSPAFA), serve as a signal peptide directing secretion. The heme c site is built by C39, C42, H43, and M83.

The protein belongs to the cytochrome c family. PetJ subfamily. As to quaternary structure, monomer. Post-translationally, binds 1 heme c group covalently per subunit.

It localises to the cellular thylakoid lumen. Functions as an electron carrier between membrane-bound cytochrome b6-f and photosystem I in oxygenic photosynthesis. This Gloeothece citriformis (strain PCC 7424) (Cyanothece sp. (strain PCC 7424)) protein is Cytochrome c6.